Consider the following 235-residue polypeptide: 2,3,4,5-tetrahydropyridine-2,6-dicarboxylate N-acetyltransferase (235 aa).

It belongs to the transferase hexapeptide repeat family. DapH subfamily.

It carries out the reaction (S)-2,3,4,5-tetrahydrodipicolinate + acetyl-CoA + H2O = L-2-acetamido-6-oxoheptanedioate + CoA. It functions in the pathway amino-acid biosynthesis; L-lysine biosynthesis via DAP pathway; LL-2,6-diaminopimelate from (S)-tetrahydrodipicolinate (acetylase route): step 1/3. Catalyzes the transfer of an acetyl group from acetyl-CoA to tetrahydrodipicolinate. The sequence is that of 2,3,4,5-tetrahydropyridine-2,6-dicarboxylate N-acetyltransferase from Exiguobacterium sibiricum (strain DSM 17290 / CCUG 55495 / CIP 109462 / JCM 13490 / 255-15).